The primary structure comprises 521 residues: Cytochrome P450 1A1 (521 aa).

Phe-229 serves as a coordination point for substrate. Cys-463 contacts heme.

It belongs to the cytochrome P450 family. Heme serves as cofactor.

The protein localises to the endoplasmic reticulum membrane. The protein resides in the microsome membrane. The enzyme catalyses an organic molecule + reduced [NADPH--hemoprotein reductase] + O2 = an alcohol + oxidized [NADPH--hemoprotein reductase] + H2O + H(+). Its function is as follows. Cytochromes P450 are a group of heme-thiolate monooxygenases. They oxidize a variety of structurally unrelated compounds, including steroids, fatty acids, and xenobiotics. The sequence is that of Cytochrome P450 1A1 (cyp1a1) from Chelon auratus (Golden grey mullet).